Reading from the N-terminus, the 354-residue chain is MLDLRGDPIELTAALIDIPSESRKEARIADEVEAALRAQASGFEIIRNGNAVLARTKLNRSSRVLLAGHLDTVPVAGNLPSRRENDQLHGCGAADMKSGDAVFLHLAATLAEPTHDLTLVFYDCEEIDSAANGLGRIQRELPDWLSADVAILGEPTAGCIEAGCQGTLRVVLSVTGTRAHSARSWLGDNAIHKLGAVLDRLAVYRARSVDIDGCTYREGLSAVRVAGGVAGNVIPDAASVTINYRFAPDRSVAAALQHVHDVFDGLDVQIEQTDAAAGALPGLSEPAAKALVEAAGGQVRAKYGWTDVSRFAALGIPAVNYGPGDPNLAHCRDERVPVGNITAAVDLLRRYLGG.

H69 contacts Zn(2+). D71 is an active-site residue. D95 provides a ligand contact to Zn(2+). The Proton acceptor role is filled by E125. Zn(2+) contacts are provided by E126, E154, and H330.

This sequence belongs to the peptidase M20A family. In terms of assembly, homodimer. Requires Zn(2+) as cofactor. The cofactor is Co(2+).

The catalysed reaction is N-succinyl-(2S,6S)-2,6-diaminopimelate + H2O = (2S,6S)-2,6-diaminopimelate + succinate. The protein operates within amino-acid biosynthesis; L-lysine biosynthesis via DAP pathway; LL-2,6-diaminopimelate from (S)-tetrahydrodipicolinate (succinylase route): step 3/3. Its function is as follows. Catalyzes the hydrolysis of N-succinyl-L,L-diaminopimelic acid (SDAP), forming succinate and LL-2,6-diaminoheptanedioate (DAP), an intermediate involved in the bacterial biosynthesis of lysine and meso-diaminopimelic acid. The chain is Putative succinyl-diaminopimelate desuccinylase DapE (dapE) from Mycobacterium tuberculosis (strain CDC 1551 / Oshkosh).